The chain runs to 407 residues: Peptidase T (407 aa).

A Zn(2+)-binding site is contributed by His77. The active site involves Asp79. Asp140 provides a ligand contact to Zn(2+). The active-site Proton acceptor is Glu174. The Zn(2+) site is built by Glu175, Asp197, and His379.

This sequence belongs to the peptidase M20B family. It depends on Zn(2+) as a cofactor.

Its subcellular location is the cytoplasm. It carries out the reaction Release of the N-terminal residue from a tripeptide.. Its function is as follows. Cleaves the N-terminal amino acid of tripeptides. This Bacteroides fragilis (strain YCH46) protein is Peptidase T.